Consider the following 509-residue polypeptide: Maturase K (509 aa).

This sequence belongs to the intron maturase 2 family. MatK subfamily.

The protein resides in the plastid. Functionally, usually encoded in the trnK tRNA gene intron. Probably assists in splicing its own and other chloroplast group II introns. The polypeptide is Maturase K (Cuscuta reflexa (Southern Asian dodder)).